The sequence spans 85 residues: Cell division topological specificity factor (85 aa).

The protein belongs to the MinE family.

In terms of biological role, prevents the cell division inhibition by proteins MinC and MinD at internal division sites while permitting inhibition at polar sites. This ensures cell division at the proper site by restricting the formation of a division septum at the midpoint of the long axis of the cell. This Thioalkalivibrio sulfidiphilus (strain HL-EbGR7) protein is Cell division topological specificity factor.